Reading from the N-terminus, the 704-residue chain is Elongation factor G (704 aa).

The 284-residue stretch at 8 to 291 (DKVRNIGIMA…AVVEYLASPV (284 aa)) folds into the tr-type G domain. GTP contacts are provided by residues 17 to 24 (AHIDAGKT), 90 to 94 (DTPGH), and 144 to 147 (NKMD).

This sequence belongs to the TRAFAC class translation factor GTPase superfamily. Classic translation factor GTPase family. EF-G/EF-2 subfamily.

It localises to the cytoplasm. In terms of biological role, catalyzes the GTP-dependent ribosomal translocation step during translation elongation. During this step, the ribosome changes from the pre-translocational (PRE) to the post-translocational (POST) state as the newly formed A-site-bound peptidyl-tRNA and P-site-bound deacylated tRNA move to the P and E sites, respectively. Catalyzes the coordinated movement of the two tRNA molecules, the mRNA and conformational changes in the ribosome. This is Elongation factor G from Chlorobium limicola (strain DSM 245 / NBRC 103803 / 6330).